Reading from the N-terminus, the 84-residue chain is Magnetosome protein MamR (84 aa).

It belongs to the magnetosome MamR family.

The protein localises to the magnetosome. May play a role in controlling magnetite number and size but not in control of magnetite morphology. The protein is Magnetosome protein MamR of Paramagnetospirillum magneticum (strain ATCC 700264 / AMB-1) (Magnetospirillum magneticum).